We begin with the raw amino-acid sequence, 142 residues long: Small ribosomal subunit protein uS11c (142 aa).

This sequence belongs to the universal ribosomal protein uS11 family. As to quaternary structure, part of the 30S ribosomal subunit.

The protein localises to the plastid. Its subcellular location is the chloroplast. The protein is Small ribosomal subunit protein uS11c of Welwitschia mirabilis (Tree tumbo).